Reading from the N-terminus, the 213-residue chain is GTP cyclohydrolase 1 (213 aa).

The Zn(2+) site is built by C104, H107, and C175.

The protein belongs to the GTP cyclohydrolase I family. As to quaternary structure, homomer.

It carries out the reaction GTP + H2O = 7,8-dihydroneopterin 3'-triphosphate + formate + H(+). Its pathway is cofactor biosynthesis; 7,8-dihydroneopterin triphosphate biosynthesis; 7,8-dihydroneopterin triphosphate from GTP: step 1/1. The chain is GTP cyclohydrolase 1 from Brucella canis (strain ATCC 23365 / NCTC 10854 / RM-666).